The chain runs to 232 residues: 5'-methylthioadenosine/S-adenosylhomocysteine nucleosidase (232 aa).

The active-site Proton acceptor is E12. Residues G78, I152, and 173-174 (ME) contribute to the substrate site. D197 serves as the catalytic Proton donor.

The protein belongs to the PNP/UDP phosphorylase family. MtnN subfamily. Homodimer.

It carries out the reaction S-adenosyl-L-homocysteine + H2O = S-(5-deoxy-D-ribos-5-yl)-L-homocysteine + adenine. It catalyses the reaction S-methyl-5'-thioadenosine + H2O = 5-(methylsulfanyl)-D-ribose + adenine. The catalysed reaction is 5'-deoxyadenosine + H2O = 5-deoxy-D-ribose + adenine. Its pathway is amino-acid biosynthesis; L-methionine biosynthesis via salvage pathway; S-methyl-5-thio-alpha-D-ribose 1-phosphate from S-methyl-5'-thioadenosine (hydrolase route): step 1/2. In terms of biological role, catalyzes the irreversible cleavage of the glycosidic bond in both 5'-methylthioadenosine (MTA) and S-adenosylhomocysteine (SAH/AdoHcy) to adenine and the corresponding thioribose, 5'-methylthioribose and S-ribosylhomocysteine, respectively. Also cleaves 5'-deoxyadenosine, a toxic by-product of radical S-adenosylmethionine (SAM) enzymes, into 5-deoxyribose and adenine. Thus, is required for in vivo function of the radical SAM enzymes biotin synthase and lipoic acid synthase, that are inhibited by 5'-deoxyadenosine accumulation. The protein is 5'-methylthioadenosine/S-adenosylhomocysteine nucleosidase of Citrobacter koseri (strain ATCC BAA-895 / CDC 4225-83 / SGSC4696).